We begin with the raw amino-acid sequence, 343 residues long: RNA 3'-terminal phosphate cyclase (343 aa).

Residues glutamine 102 and 284-288 each bind ATP; that span reads FLGDQ. Catalysis depends on histidine 308, which acts as the Tele-AMP-histidine intermediate.

It belongs to the RNA 3'-terminal cyclase family. Type 1 subfamily.

The protein resides in the cytoplasm. It catalyses the reaction a 3'-end 3'-phospho-ribonucleotide-RNA + ATP = a 3'-end 2',3'-cyclophospho-ribonucleotide-RNA + AMP + diphosphate. Its function is as follows. Catalyzes the conversion of 3'-phosphate to a 2',3'-cyclic phosphodiester at the end of RNA. The mechanism of action of the enzyme occurs in 3 steps: (A) adenylation of the enzyme by ATP; (B) transfer of adenylate to an RNA-N3'P to produce RNA-N3'PP5'A; (C) and attack of the adjacent 2'-hydroxyl on the 3'-phosphorus in the diester linkage to produce the cyclic end product. The biological role of this enzyme is unknown but it is likely to function in some aspects of cellular RNA processing. The sequence is that of RNA 3'-terminal phosphate cyclase (rtcA) from Thermococcus kodakarensis (strain ATCC BAA-918 / JCM 12380 / KOD1) (Pyrococcus kodakaraensis (strain KOD1)).